Reading from the N-terminus, the 573-residue chain is Phosphoenolpyruvate-protein phosphotransferase (573 aa).

Catalysis depends on histidine 190, which acts as the Tele-phosphohistidine intermediate. Residues arginine 297 and arginine 332 each contribute to the phosphoenolpyruvate site. Mg(2+)-binding residues include glutamate 431 and aspartate 455. Phosphoenolpyruvate-binding positions include asparagine 454–aspartate 455 and arginine 465. Residue cysteine 502 is the Proton donor of the active site.

It belongs to the PEP-utilizing enzyme family. In terms of assembly, homodimer. Mg(2+) serves as cofactor.

The protein resides in the cytoplasm. The enzyme catalyses L-histidyl-[protein] + phosphoenolpyruvate = N(pros)-phospho-L-histidyl-[protein] + pyruvate. Irreversibly inhibited the sulfhydryl reagent N-ethylmaleimide (NEM). Functionally, general (non sugar-specific) component of the phosphoenolpyruvate-dependent sugar phosphotransferase system (sugar PTS). This major carbohydrate active-transport system catalyzes the phosphorylation of incoming sugar substrates concomitantly with their translocation across the cell membrane. Enzyme I transfers the phosphoryl group from phosphoenolpyruvate (PEP) to the phosphoryl carrier protein (HPr). This is Phosphoenolpyruvate-protein phosphotransferase (ptsI) from Mycoplasma capricolum subsp. capricolum (strain California kid / ATCC 27343 / NCTC 10154).